Reading from the N-terminus, the 243-residue chain is Phosphoadenosine 5'-phosphosulfate reductase (243 aa).

Cys239 serves as the catalytic Nucleophile; cysteine thiosulfonate intermediate.

It belongs to the PAPS reductase family. CysH subfamily.

The protein localises to the cytoplasm. The enzyme catalyses [thioredoxin]-disulfide + sulfite + adenosine 3',5'-bisphosphate + 2 H(+) = [thioredoxin]-dithiol + 3'-phosphoadenylyl sulfate. Its pathway is sulfur metabolism; hydrogen sulfide biosynthesis; sulfite from sulfate: step 3/3. Functionally, catalyzes the formation of sulfite from phosphoadenosine 5'-phosphosulfate (PAPS) using thioredoxin as an electron donor. The polypeptide is Phosphoadenosine 5'-phosphosulfate reductase (Proteus mirabilis (strain HI4320)).